A 691-amino-acid chain; its full sequence is Alpha-1,4-glucan:maltose-1-phosphate maltosyltransferase (691 aa).

Residues Lys-280, Gln-341, and Asp-376 each coordinate alpha-maltose 1-phosphate. Asp-411 serves as the catalytic Nucleophile. Asn-412 lines the alpha-maltose 1-phosphate pocket. The active-site Proton donor is the Glu-440. Lys-550–Tyr-551 contributes to the alpha-maltose 1-phosphate binding site.

Belongs to the glycosyl hydrolase 13 family. GlgE subfamily. In terms of assembly, homodimer.

It catalyses the reaction alpha-maltose 1-phosphate + [(1-&gt;4)-alpha-D-glucosyl](n) = [(1-&gt;4)-alpha-D-glucosyl](n+2) + phosphate. Maltosyltransferase that uses maltose 1-phosphate (M1P) as the sugar donor to elongate linear or branched alpha-(1-&gt;4)-glucans. Is involved in a branched alpha-glucan biosynthetic pathway from trehalose, together with TreS, Mak and GlgB. This chain is Alpha-1,4-glucan:maltose-1-phosphate maltosyltransferase, found in Arcanobacterium haemolyticum (strain ATCC 9345 / DSM 20595 / CCM 5947 / CCUG 17215 / LMG 16163 / NBRC 15585 / NCTC 8452 / 11018).